We begin with the raw amino-acid sequence, 372 residues long: Gustatory and pheromone receptor 39a, isoform B (372 aa).

Over 1–32 (MGTRNRKLLFFLHYQRYLGLTNLDFSKSLHIY) the chain is Cytoplasmic. The chain crosses the membrane as a helical span at residues 33-53 (WLHGTWSSTAIQIVVVGVFMA). Over 54–59 (ALLGAL) the chain is Extracellular. The helical transmembrane segment at 60 to 80 (AESLYYMETKSQTGNTFDNAV) threads the bilayer. Topologically, residues 81 to 122 (ILTTSVTQLLANLWLRSQQKSQVNLLQRLSQVVELLQFEPYA) are cytoplasmic. Residues 123–143 (VPQFRWLYRIWLLVCLIYGAM) form a helical membrane-spanning segment. At 144–147 (VTHF) the chain is on the extracellular side. The chain crosses the membrane as a helical span at residues 148-168 (GINWLTTMQISRVLTLIGFVY). At 169–224 (RCVLANFQFTCYTGMVVILKKLLQVQVKQLEHLVSTTTISMAGVAGCLRTHDEILL) the chain is on the cytoplasmic side. Residues 225 to 245 (LGQRELIAVYGGVILFLFIYQ) traverse the membrane as a helical segment. The Extracellular portion of the chain corresponds to 246 to 265 (VMQCILIFYISNLEGFHSSN). Residues 266–286 (DLVLIFCWLAPMLFYLILPLV) form a helical membrane-spanning segment. The Cytoplasmic portion of the chain corresponds to 287 to 348 (VNDIHNQANK…KSTLFKLFTA (62 aa)). A helical membrane pass occupies residues 349-368 (IFTYMVILVQFKEMENSTKS). Residue isoleucine 369 is a topological domain, extracellular.

It belongs to the insect chemoreceptor superfamily. Gustatory receptor (GR) family. Gr21a subfamily. Expressed in the adult labellar chemosensory neurons. In larvae, is expressed in neurons of the terminal external chemosensory organ, as well as in the dorsal and posterior pharyngeal sense organs.

It localises to the cell membrane. Its function is as follows. Gustatory receptor which mediates acceptance or avoidance behavior, depending on its substrates. Plays a role in sustaining courtship behavior in males, possibly through the reception of a stimulating arrestant pheromone. The polypeptide is Gustatory and pheromone receptor 39a, isoform B (Gr39a) (Drosophila melanogaster (Fruit fly)).